The primary structure comprises 187 residues: UPF0301 protein YPTS_3341 (187 aa).

This sequence belongs to the UPF0301 (AlgH) family.

The protein is UPF0301 protein YPTS_3341 of Yersinia pseudotuberculosis serotype IB (strain PB1/+).